The following is a 456-amino-acid chain: Methylenetetrahydrofolate--tRNA-(uracil-5-)-methyltransferase TrmFO (456 aa).

11 to 16 (GGGLAG) contacts FAD.

It belongs to the MnmG family. TrmFO subfamily. FAD serves as cofactor.

It localises to the cytoplasm. It carries out the reaction uridine(54) in tRNA + (6R)-5,10-methylene-5,6,7,8-tetrahydrofolate + NADH + H(+) = 5-methyluridine(54) in tRNA + (6S)-5,6,7,8-tetrahydrofolate + NAD(+). It catalyses the reaction uridine(54) in tRNA + (6R)-5,10-methylene-5,6,7,8-tetrahydrofolate + NADPH + H(+) = 5-methyluridine(54) in tRNA + (6S)-5,6,7,8-tetrahydrofolate + NADP(+). Catalyzes the folate-dependent formation of 5-methyl-uridine at position 54 (M-5-U54) in all tRNAs. This Synechocystis sp. (strain ATCC 27184 / PCC 6803 / Kazusa) protein is Methylenetetrahydrofolate--tRNA-(uracil-5-)-methyltransferase TrmFO.